The chain runs to 97 residues: Cystatin-A (97 aa).

M1 carries the post-translational modification N-acetylmethionine. The short motif at 46–50 (QVVAG) is the Secondary area of contact element.

The protein belongs to the cystatin family.

Its subcellular location is the cytoplasm. This is an intracellular thiol proteinase inhibitor. The chain is Cystatin-A (Csta) from Mus musculus (Mouse).